A 591-amino-acid polypeptide reads, in one-letter code: Aspartate--tRNA(Asp/Asn) ligase (591 aa).

Position 176 (E176) interacts with L-aspartate. The segment at 200 to 203 is aspartate; it reads QLFK. R222 is a binding site for L-aspartate. Residues 222 to 224 and Q231 each bind ATP; that span reads RDE. H450 provides a ligand contact to L-aspartate. Residue E484 participates in ATP binding. R491 is a binding site for L-aspartate. 536 to 539 is a binding site for ATP; sequence GLDR.

This sequence belongs to the class-II aminoacyl-tRNA synthetase family. Type 1 subfamily. Homodimer.

It is found in the cytoplasm. It carries out the reaction tRNA(Asx) + L-aspartate + ATP = L-aspartyl-tRNA(Asx) + AMP + diphosphate. Aspartyl-tRNA synthetase with relaxed tRNA specificity since it is able to aspartylate not only its cognate tRNA(Asp) but also tRNA(Asn). Reaction proceeds in two steps: L-aspartate is first activated by ATP to form Asp-AMP and then transferred to the acceptor end of tRNA(Asp/Asn). This is Aspartate--tRNA(Asp/Asn) ligase from Bacillus cereus (strain G9842).